A 307-amino-acid polypeptide reads, in one-letter code: Recombination-associated protein RdgC (307 aa).

This sequence belongs to the RdgC family.

Its subcellular location is the cytoplasm. The protein localises to the nucleoid. Functionally, may be involved in recombination. This chain is Recombination-associated protein RdgC, found in Burkholderia orbicola (strain MC0-3).